The chain runs to 101 residues: Small ribosomal subunit protein uS14 (101 aa).

The protein belongs to the universal ribosomal protein uS14 family. Part of the 30S ribosomal subunit. Contacts proteins S3 and S10.

Binds 16S rRNA, required for the assembly of 30S particles and may also be responsible for determining the conformation of the 16S rRNA at the A site. The polypeptide is Small ribosomal subunit protein uS14 (Actinobacillus succinogenes (strain ATCC 55618 / DSM 22257 / CCUG 43843 / 130Z)).